The sequence spans 2568 residues: Highly reducing polyketide synthase AN6791 (2568 aa).

The 435-residue stretch at 11–445 (AEPIAIVGLS…GTNAHLIVES (435 aa)) folds into the Ketosynthase family 3 (KS3) domain. Catalysis depends on for beta-ketoacyl synthase activity residues C200, H326, and H366. A Malonyl-CoA:ACP transacylase (MAT) domain is found at 558 to 882 (VFTGQGAQWY…GSLVREVSAV (325 aa)). Residues 949–1087 (HDLLGSLVLG…GLITMEPEDA (139 aa)) are N-terminal hotdog fold. The PKS/mFAS DH domain maps to 949–1258 (HDLLGSLVLG…FQSVGRSAAP (310 aa)). The active-site Proton acceptor; for dehydratase activity is the H981. The segment at 1104–1258 (TRRFGPSDLY…FQSVGRSAAP (155 aa)) is C-terminal hotdog fold. Catalysis depends on D1169, which acts as the Proton donor; for dehydratase activity. The interval 1311-1620 (RACLYFIYDA…EVRDCESDEW (310 aa)) is methyltransferase (CMet) domain. In terms of domain architecture, Enoyl reductase (ER) spans 1857–2174 (GLLDTIAFDD…VGKHSGKVVL (318 aa)). A Ketoreductase (KR) domain is found at 2197-2375 (ASYLLVGGAG…AVSMDLGPVK (179 aa)). The Carrier domain maps to 2481-2558 (QAEKLVVEAI…ALASEVTRKS (78 aa)). Position 2518 is an O-(pantetheine 4'-phosphoryl)serine (S2518).

The cofactor is pantetheine 4'-phosphate.

It functions in the pathway secondary metabolite biosynthesis. In terms of biological role, highly reducing polyketide synthase; part of a cluster that mediates the biosynthesis of a yet undetermined secondary metabolite. With esterase AN6793, produces a pathway intermediate compound with molecular weight 258. This chain is Highly reducing polyketide synthase AN6791, found in Emericella nidulans (strain FGSC A4 / ATCC 38163 / CBS 112.46 / NRRL 194 / M139) (Aspergillus nidulans).